Consider the following 141-residue polypeptide: Large ribosomal subunit protein uL11 (141 aa).

Belongs to the universal ribosomal protein uL11 family. As to quaternary structure, part of the ribosomal stalk of the 50S ribosomal subunit. Interacts with L10 and the large rRNA to form the base of the stalk. L10 forms an elongated spine to which L12 dimers bind in a sequential fashion forming a multimeric L10(L12)X complex. Post-translationally, one or more lysine residues are methylated.

In terms of biological role, forms part of the ribosomal stalk which helps the ribosome interact with GTP-bound translation factors. This is Large ribosomal subunit protein uL11 from Fervidobacterium nodosum (strain ATCC 35602 / DSM 5306 / Rt17-B1).